Consider the following 75-residue polypeptide: Conotoxin TsMEKL-011 (75 aa).

The N-terminal stretch at 1 to 19 (MEKLTILLLVAAVLMSTQA) is a signal peptide. Residues 20 to 45 (LIQRGGAKRRKVNFFSIREPGAEDWR) constitute a propeptide that is removed on maturation. Cystine bridges form between Cys49-Cys63, Cys56-Cys67, and Cys62-Cys71.

Belongs to the conotoxin O2 superfamily. As to expression, expressed by the venom duct.

It localises to the secreted. This chain is Conotoxin TsMEKL-011, found in Conus tessulatus (Tessellate cone).